A 196-amino-acid polypeptide reads, in one-letter code: Translation initiation factor IF-3 (196 aa).

It belongs to the IF-3 family. As to quaternary structure, monomer.

It is found in the cytoplasm. Its function is as follows. IF-3 binds to the 30S ribosomal subunit and shifts the equilibrium between 70S ribosomes and their 50S and 30S subunits in favor of the free subunits, thus enhancing the availability of 30S subunits on which protein synthesis initiation begins. This Wigglesworthia glossinidia brevipalpis protein is Translation initiation factor IF-3.